Here is a 252-residue protein sequence, read N- to C-terminus: Thiazole synthase (252 aa).

The Schiff-base intermediate with DXP role is filled by Lys95. Residues Gly156, 182 to 183, and 204 to 205 each bind 1-deoxy-D-xylulose 5-phosphate; these read AG and NT.

Belongs to the ThiG family. As to quaternary structure, homotetramer. Forms heterodimers with either ThiH or ThiS.

It is found in the cytoplasm. The enzyme catalyses [ThiS sulfur-carrier protein]-C-terminal-Gly-aminoethanethioate + 2-iminoacetate + 1-deoxy-D-xylulose 5-phosphate = [ThiS sulfur-carrier protein]-C-terminal Gly-Gly + 2-[(2R,5Z)-2-carboxy-4-methylthiazol-5(2H)-ylidene]ethyl phosphate + 2 H2O + H(+). It functions in the pathway cofactor biosynthesis; thiamine diphosphate biosynthesis. Functionally, catalyzes the rearrangement of 1-deoxy-D-xylulose 5-phosphate (DXP) to produce the thiazole phosphate moiety of thiamine. Sulfur is provided by the thiocarboxylate moiety of the carrier protein ThiS. In vitro, sulfur can be provided by H(2)S. The chain is Thiazole synthase from Shewanella sp. (strain ANA-3).